A 105-amino-acid chain; its full sequence is Flagellar transcriptional regulator FlhD (105 aa).

Belongs to the FlhD family. As to quaternary structure, homodimer; disulfide-linked. Forms a heterohexamer composed of two FlhC and four FlhD subunits. Each FlhC binds a FlhD dimer, forming a heterotrimer, and a hexamer assembles by dimerization of two heterotrimers.

It localises to the cytoplasm. Functions in complex with FlhC as a master transcriptional regulator that regulates transcription of several flagellar and non-flagellar operons by binding to their promoter region. Activates expression of class 2 flagellar genes, including fliA, which is a flagellum-specific sigma factor that turns on the class 3 genes. Also regulates genes whose products function in a variety of physiological pathways. This is Flagellar transcriptional regulator FlhD from Nitrosomonas europaea (strain ATCC 19718 / CIP 103999 / KCTC 2705 / NBRC 14298).